The following is a 227-amino-acid chain: Cytidylate kinase (227 aa).

10–18 is an ATP binding site; the sequence is GPASSGKST.

Belongs to the cytidylate kinase family. Type 1 subfamily.

It is found in the cytoplasm. It catalyses the reaction CMP + ATP = CDP + ADP. It carries out the reaction dCMP + ATP = dCDP + ADP. This is Cytidylate kinase from Streptococcus agalactiae serotype Ia (strain ATCC 27591 / A909 / CDC SS700).